The primary structure comprises 166 residues: UPF0303 protein Avin_29320 (166 aa).

This sequence belongs to the UPF0303 family.

This Azotobacter vinelandii (strain DJ / ATCC BAA-1303) protein is UPF0303 protein Avin_29320.